The following is a 250-amino-acid chain: 1-(5-phosphoribosyl)-5-[(5-phosphoribosylamino)methylideneamino] imidazole-4-carboxamide isomerase (250 aa).

Residue Asp-12 is the Proton acceptor of the active site. Asp-134 functions as the Proton donor in the catalytic mechanism.

The protein belongs to the HisA/HisF family.

It localises to the cytoplasm. The catalysed reaction is 1-(5-phospho-beta-D-ribosyl)-5-[(5-phospho-beta-D-ribosylamino)methylideneamino]imidazole-4-carboxamide = 5-[(5-phospho-1-deoxy-D-ribulos-1-ylimino)methylamino]-1-(5-phospho-beta-D-ribosyl)imidazole-4-carboxamide. The protein operates within amino-acid biosynthesis; L-histidine biosynthesis; L-histidine from 5-phospho-alpha-D-ribose 1-diphosphate: step 4/9. This is 1-(5-phosphoribosyl)-5-[(5-phosphoribosylamino)methylideneamino] imidazole-4-carboxamide isomerase from Actinobacillus pleuropneumoniae serotype 5b (strain L20).